A 446-amino-acid chain; its full sequence is Probable D-serine dehydratase (446 aa).

Lys-116 carries the post-translational modification N6-(pyridoxal phosphate)lysine.

This sequence belongs to the serine/threonine dehydratase family. DsdA subfamily. It depends on pyridoxal 5'-phosphate as a cofactor.

It catalyses the reaction D-serine = pyruvate + NH4(+). In Bacillus anthracis (strain CDC 684 / NRRL 3495), this protein is Probable D-serine dehydratase.